The sequence spans 585 residues: Lipoprotein LpqB (585 aa).

Positions 1-17 (MGRKLLGLLMLAVLLAG) are cleaved as a signal peptide. C18 is lipidated: N-palmitoyl cysteine. C18 is lipidated: S-diacylglycerol cysteine. Disordered stretches follow at residues 24–48 (SSAP…TPGM) and 560–585 (PSAD…VLPG).

This sequence belongs to the LpqB lipoprotein family.

It localises to the cell membrane. The sequence is that of Lipoprotein LpqB from Mycolicibacterium paratuberculosis (strain ATCC BAA-968 / K-10) (Mycobacterium paratuberculosis).